The primary structure comprises 272 residues: Energy-coupling factor transporter ATP-binding protein EcfA1 (272 aa).

Residues 2-237 form the ABC transporter domain; that stretch reads IKVSDVCFSY…KNIIEKAKID (236 aa). An ATP-binding site is contributed by 37 to 44; it reads GHNGSGKS.

Belongs to the ABC transporter superfamily. Energy-coupling factor EcfA family. In terms of assembly, forms a stable energy-coupling factor (ECF) transporter complex composed of 2 membrane-embedded substrate-binding proteins (S component), 2 ATP-binding proteins (A component) and 2 transmembrane proteins (T component).

It is found in the cell membrane. ATP-binding (A) component of a common energy-coupling factor (ECF) ABC-transporter complex. Unlike classic ABC transporters this ECF transporter provides the energy necessary to transport a number of different substrates. The sequence is that of Energy-coupling factor transporter ATP-binding protein EcfA1 from Mesomycoplasma hyopneumoniae (strain 7448) (Mycoplasma hyopneumoniae).